The sequence spans 232 residues: MAVISMKQLLEAGVHFGHQTRRWNPKMAPYIFTDRNGIYIIDLQKTVKKVEEAYNFIKQLAAEGETVLFVGTKKQAQEAVQEEAERCGMFYVNQRWLGGMLTNFQTIRRRIDRLQELEKMEENGSLEVLPKKEVAELMHEKEKLQKFLGGIKEMRRLPGALFVIDPRKERIAVAEARKLGIPIVAIVDTNCDPDEVDYVIPGNDDAIRAVRLLTAKMADAVLEGKQGEQLAE.

The protein belongs to the universal ribosomal protein uS2 family.

The sequence is that of Small ribosomal subunit protein uS2 from Pelotomaculum thermopropionicum (strain DSM 13744 / JCM 10971 / SI).